Here is a 184-residue protein sequence, read N- to C-terminus: Tumor necrosis factor alpha-induced protein 8-like protein 2 (184 aa).

Ser-3 carries the post-translational modification Phosphoserine.

Belongs to the TNFAIP8 family. TNFAIP8L2 subfamily. May interact with CASP8; however, such result is unclear since could not reproduce the interaction with CASP8. Interacts with RAC1. In terms of processing, phosphorylated by TAK1/MAP3K7; this phosphorylation triggers association with BTRC and subsequent ubiquitination and degradation. Post-translationally, ubiquitinated in a BTRC-depdent manner; leading to degradation mediated through the proteasome pathway. In terms of tissue distribution, expressed in thymus, spleen, lymph node and small intestine, but not in liver, heart, muscle, testis, spinal cord or brain. Up-regulated in the spinal cord of mice with experimental autoimmune encephalomyelitis. Constitutively expressed by macrophages, B and T-lymphocytes at various developmental stages.

The protein localises to the cytoplasm. The protein resides in the nucleus. It is found in the lysosome. Functionally, acts as a negative regulator of innate and adaptive immunity by maintaining immune homeostasis. Plays a regulatory role in the Toll-like signaling pathway by determining the strength of LPS-induced signaling and gene expression. Inhibits TCR-mediated T-cell activation and negatively regulate T-cell function to prevent hyperresponsiveness. Also inhibits autolysosome formation via negatively modulating MTOR activation by interacting with RAC1 and promoting the disassociation of the RAC1-MTOR complex. Plays an essential role in NK-cell biology by acting as a checkpoint and displaying an expression pattern correlating with NK-cell maturation process and by negatively regulating NK-cell maturation and antitumor immunity. Mechanistically, suppresses IL-15-triggered mTOR activity in NK-cells. This Mus musculus (Mouse) protein is Tumor necrosis factor alpha-induced protein 8-like protein 2 (Tnfaip8l2).